The primary structure comprises 397 residues: Acetate kinase (397 aa).

N8 contributes to the Mg(2+) binding site. K15 is a binding site for ATP. R92 is a substrate binding site. The active-site Proton donor/acceptor is the D149. ATP-binding positions include 209 to 213 (HLGNG), 283 to 285 (DFR), and 331 to 335 (GVGEN). E385 is a binding site for Mg(2+).

It belongs to the acetokinase family. As to quaternary structure, homodimer. It depends on Mg(2+) as a cofactor. Mn(2+) serves as cofactor.

The protein resides in the cytoplasm. The catalysed reaction is acetate + ATP = acetyl phosphate + ADP. It participates in metabolic intermediate biosynthesis; acetyl-CoA biosynthesis; acetyl-CoA from acetate: step 1/2. Functionally, catalyzes the formation of acetyl phosphate from acetate and ATP. Can also catalyze the reverse reaction. The protein is Acetate kinase of Corynebacterium glutamicum (strain ATCC 13032 / DSM 20300 / JCM 1318 / BCRC 11384 / CCUG 27702 / LMG 3730 / NBRC 12168 / NCIMB 10025 / NRRL B-2784 / 534).